We begin with the raw amino-acid sequence, 226 residues long: MKKAVVLLSGGLDSTTTLAIARGNGFACYALSVDYGQRHAAELAAATRIGQLLQVCEHQFLKLDLTVLASSALTDPSVTVPIHGTNRGIPATYVPARNTIMLSLALAWAEVLGSQDIFIGVTAVDYSGYPDCRPDYIDAFEKMANLATKAGREGNLLKVHAPLINLPKHDIIRRGLELGIDYSMTVSCYQADASGWACGQCDACHIRRAGFAAANIPDPTYYQDKR.

8 to 18 (LSGGLDSTTTL) contributes to the ATP binding site. Residues cysteine 188, cysteine 198, cysteine 201, and cysteine 204 each contribute to the Zn(2+) site.

This sequence belongs to the QueC family. Zn(2+) serves as cofactor.

The enzyme catalyses 7-carboxy-7-deazaguanine + NH4(+) + ATP = 7-cyano-7-deazaguanine + ADP + phosphate + H2O + H(+). It functions in the pathway purine metabolism; 7-cyano-7-deazaguanine biosynthesis. Catalyzes the ATP-dependent conversion of 7-carboxy-7-deazaguanine (CDG) to 7-cyano-7-deazaguanine (preQ(0)). In Nitrosomonas eutropha (strain DSM 101675 / C91 / Nm57), this protein is 7-cyano-7-deazaguanine synthase.